A 790-amino-acid chain; its full sequence is MRMLRWLILSAFSVAGAVQAQGNQDSAAASASSASIGAPVLRTSPGLRVHRLPDEKIPAFMEADQISGDPDSEVTLTGNAQVRRVDGIIKGDRINYRRDTGDVDVQGSARMLRDGTLITGPSARLNVDTYSGEIQEPNFWIGASGGTAQARHADIFSKSQMRLSQVTYSGCPCPKPSWYIKADTVDLDFDENEGVARNGVLYFKDVPILASPYLTFPVKKERKSGFLMPTYGTTSNSGFDISLPYYFNLAPNYDLTLVPRYLSKRGAQLGGEFRYLGSGYRGVAIGTYLPDDNETGRDRWMYRTYHRQLLGNGFYTDWDIAGASDDNYFRDISELGLNTASTTYLPRRGRVGWSSTYWQTYAQVYKYQTLQDPDAPLAPPYDKVPELWLKGARYDWGGFDAEWVSTAVRFQRPLLNGRRLGPDGDRLQTYPTVSYPIVRPGWFLVPKVGVHYTQYRTDWYNRDWNRIGLSNYKRTESRTVPIMSLDAGMIFERDASLFGKAATQTLEPRLYYLRVPYRDQSALPVYDTTLADFSFDQAFQENIYTGGWDRIANANQLTAALTTRWLDANTGFERLSLSAAQRIYFQDQEVTLPAEQPRKNVRSDFLVGATAALTDTLTTDVAAQYNPYDNKWSRGMVSARWSPQRLTTVAVAYRYQRDPLPGISYQPQGQNQVSLAVQWPIHRRWYGVGRVDYSLRSEPATAAAAEQSPRVTQAIAGLEYKGDCCWVGRVVYQRYAVSAADTNTALFFQLELTGLGALGTDPISLLNRSIPGYQSVVPPTPTGTTFERYE.

A signal peptide spans 1–20; it reads MRMLRWLILSAFSVAGAVQA.

It belongs to the LptD family. As to quaternary structure, component of the lipopolysaccharide transport and assembly complex. Interacts with LptE and LptA.

The protein localises to the cell outer membrane. Its function is as follows. Together with LptE, is involved in the assembly of lipopolysaccharide (LPS) at the surface of the outer membrane. The polypeptide is LPS-assembly protein LptD (Bordetella parapertussis (strain 12822 / ATCC BAA-587 / NCTC 13253)).